The following is a 176-amino-acid chain: Flavodoxin-like domain-containing protein BilS (176 aa).

The protein operates within porphyrin-containing compound metabolism; protoheme degradation. In terms of biological role, together with BilR, catalyzes reduction of mesobilirubin and/or bilirubin to urobilinogen, a key step during heme degradation. BilS is probably involved in electron transfer for the bilirubin reductase BilR. The chain is Flavodoxin-like domain-containing protein BilS from Clostridioides difficile (strain CD3).